A 141-amino-acid polypeptide reads, in one-letter code: Large ribosomal subunit protein uL11 (141 aa).

It belongs to the universal ribosomal protein uL11 family. Part of the ribosomal stalk of the 50S ribosomal subunit. Interacts with L10 and the large rRNA to form the base of the stalk. L10 forms an elongated spine to which L12 dimers bind in a sequential fashion forming a multimeric L10(L12)X complex. In terms of processing, one or more lysine residues are methylated.

Functionally, forms part of the ribosomal stalk which helps the ribosome interact with GTP-bound translation factors. The sequence is that of Large ribosomal subunit protein uL11 from Ruegeria pomeroyi (strain ATCC 700808 / DSM 15171 / DSS-3) (Silicibacter pomeroyi).